A 479-amino-acid polypeptide reads, in one-letter code: Anaerobic nitric oxide reductase flavorubredoxin (479 aa).

The tract at residues 30-210 (LRGSSYNSYL…PFSRLVTPKI (181 aa)) is zinc metallo-hydrolase. His-79, Glu-81, Asp-83, His-147, Asp-166, and His-227 together coordinate Fe cation. A Flavodoxin-like domain is found at 254–393 (ITIFYDTMSN…LCREHGREIA (140 aa)). FMN contacts are provided by residues 260–264 (TMSNN) and 342–369 (AFGS…EMSL). The region spanning 423-474 (GPRMQCSVCQWIYDPAKGEPMQDVAPGTPWSEVPDNFLCPECSLGKDVFEEL) is the Rubredoxin-like domain. Cys-428, Cys-431, Cys-461, and Cys-464 together coordinate Fe cation.

In the N-terminal section; belongs to the zinc metallo-hydrolase group 3 family. As to quaternary structure, homotetramer. Fe cation is required as a cofactor. The cofactor is FMN.

The protein resides in the cytoplasm. The protein operates within nitrogen metabolism; nitric oxide reduction. Functionally, anaerobic nitric oxide reductase; uses NADH to detoxify nitric oxide (NO), protecting several 4Fe-4S NO-sensitive enzymes. Has at least 2 reductase partners, only one of which (NorW, flavorubredoxin reductase) has been identified. NO probably binds to the di-iron center; electrons enter from the NorW at rubredoxin and are transferred sequentially to the FMN center and the di-iron center. Also able to function as an aerobic oxygen reductase. The protein is Anaerobic nitric oxide reductase flavorubredoxin of Shigella boydii serotype 4 (strain Sb227).